The primary structure comprises 211 residues: ATP phosphoribosyltransferase (211 aa).

It belongs to the ATP phosphoribosyltransferase family. Short subfamily. Heteromultimer composed of HisG and HisZ subunits.

It localises to the cytoplasm. The catalysed reaction is 1-(5-phospho-beta-D-ribosyl)-ATP + diphosphate = 5-phospho-alpha-D-ribose 1-diphosphate + ATP. It functions in the pathway amino-acid biosynthesis; L-histidine biosynthesis; L-histidine from 5-phospho-alpha-D-ribose 1-diphosphate: step 1/9. In terms of biological role, catalyzes the condensation of ATP and 5-phosphoribose 1-diphosphate to form N'-(5'-phosphoribosyl)-ATP (PR-ATP). Has a crucial role in the pathway because the rate of histidine biosynthesis seems to be controlled primarily by regulation of HisG enzymatic activity. The chain is ATP phosphoribosyltransferase from Bacillus cereus (strain B4264).